We begin with the raw amino-acid sequence, 386 residues long: Patatin-B1 (386 aa).

The signal sequence occupies residues 1 to 23; that stretch reads MATTKSFLILFFMILATTSSTCA. The 198-residue stretch at 32–229 folds into the PNPLA domain; sequence LSIDGGGIKG…TVGDPALLSL (198 aa). Residues 36-41 carry the GXGXXG motif; sequence GGGIKG. A GXSXG motif is present at residues 75 to 79; it reads GTSTG. Residue Ser-77 is the Nucleophile of the active site. Residue Asn-115 is glycosylated (N-linked (GlcNAc...) asparagine). The active-site Proton acceptor is the Asp-215. The short motif at 215–217 is the DGA/G element; sequence DGG.

This sequence belongs to the patatin family.

Its subcellular location is the vacuole. Probable lipolytic acyl hydrolase (LAH), an activity which is thought to be involved in the response of tubers to pathogens. This is Patatin-B1 (PATB1) from Solanum tuberosum (Potato).